Here is a 140-residue protein sequence, read N- to C-terminus: Nucleoside diphosphate kinase (140 aa).

Residues lysine 11, phenylalanine 59, arginine 87, threonine 93, arginine 104, and asparagine 114 each coordinate ATP. The Pros-phosphohistidine intermediate role is filled by histidine 117.

It belongs to the NDK family. As to quaternary structure, homotetramer. Mg(2+) is required as a cofactor.

The protein localises to the cytoplasm. It catalyses the reaction a 2'-deoxyribonucleoside 5'-diphosphate + ATP = a 2'-deoxyribonucleoside 5'-triphosphate + ADP. The catalysed reaction is a ribonucleoside 5'-diphosphate + ATP = a ribonucleoside 5'-triphosphate + ADP. In terms of biological role, major role in the synthesis of nucleoside triphosphates other than ATP. The ATP gamma phosphate is transferred to the NDP beta phosphate via a ping-pong mechanism, using a phosphorylated active-site intermediate. In Rhodospirillum centenum (strain ATCC 51521 / SW), this protein is Nucleoside diphosphate kinase.